The sequence spans 194 residues: Potassium-transporting ATPase KdpC subunit (194 aa).

Residues 12 to 34 (LFLLLLTGGVYPLLTTALGQWWF) form a helical membrane-spanning segment.

The protein belongs to the KdpC family. The system is composed of three essential subunits: KdpA, KdpB and KdpC.

It is found in the cell inner membrane. Functionally, part of the high-affinity ATP-driven potassium transport (or Kdp) system, which catalyzes the hydrolysis of ATP coupled with the electrogenic transport of potassium into the cytoplasm. This subunit acts as a catalytic chaperone that increases the ATP-binding affinity of the ATP-hydrolyzing subunit KdpB by the formation of a transient KdpB/KdpC/ATP ternary complex. The polypeptide is Potassium-transporting ATPase KdpC subunit (Salmonella schwarzengrund (strain CVM19633)).